A 457-amino-acid polypeptide reads, in one-letter code: Pancreatic triacylglycerol lipase (457 aa).

The first 7 residues, 1–7 (LLLGAVA), serve as a signal peptide directing secretion. Cystine bridges form between cysteine 12–cysteine 18 and cysteine 99–cysteine 110. Residue serine 161 is the Nucleophile of the active site. Aspartate 185 acts as the Charge relay system in catalysis. Residues glutamate 196, arginine 199, aspartate 201, and aspartate 204 each contribute to the Ca(2+) site. Cysteine 246 and cysteine 270 form a disulfide bridge. Catalysis depends on histidine 272, which acts as the Charge relay system. 2 disulfide bridges follow: cysteine 294/cysteine 305 and cysteine 308/cysteine 313. Asparagine 343 carries an N-linked (GlcNAc...) asparagine glycan. The PLAT domain occupies 347-457 (WRYQIAVTLS…EDILLTLTPC (111 aa)). Cysteine 441 and cysteine 457 are oxidised to a cystine.

The protein belongs to the AB hydrolase superfamily. Lipase family. Forms a 1:1 stoichiometric complex with (pro)colipase/CLPS.

The protein localises to the secreted. It carries out the reaction a triacylglycerol + H2O = a diacylglycerol + a fatty acid + H(+). The catalysed reaction is 1,2,3-tributanoylglycerol + H2O = dibutanoylglycerol + butanoate + H(+). The enzyme catalyses 1,2,3-tri-(9Z-octadecenoyl)-glycerol + H2O = di-(9Z)-octadecenoylglycerol + (9Z)-octadecenoate + H(+). It catalyses the reaction all-trans-retinyl hexadecanoate + H2O = all-trans-retinol + hexadecanoate + H(+). It carries out the reaction 1,2-di-(9Z-octadecenoyl)-glycerol + H2O = (9Z-octadecenoyl)-glycerol + (9Z)-octadecenoate + H(+). Inhibited by bile salts, is reactivated by (pro)colipase/CLPS. In terms of biological role, plays an important role in fat metabolism. It preferentially splits the esters of long-chain fatty acids at positions 1 and 3, producing mainly 2-monoacylglycerol and free fatty acids, and shows considerably higher activity against insoluble emulsified substrates than against soluble ones. The polypeptide is Pancreatic triacylglycerol lipase (PNLIP) (Myocastor coypus (Coypu)).